A 159-amino-acid chain; its full sequence is Major allergen Mal d 1 (159 aa).

This sequence belongs to the BetVI family.

This Malus domestica (Apple) protein is Major allergen Mal d 1.